Reading from the N-terminus, the 980-residue chain is Ankycorbin (980 aa).

The residue at position 1 (M1) is an N-acetylmethionine. Phosphoserine is present on S11. ANK repeat units lie at residues 18-51 (KNDD…KHDS), 52-81 (EGKT…DVTA), 85-114 (TGHS…PAES), 118-147 (SGKT…PINL), 151-180 (DGNI…DVNS), 184-213 (SGRT…DLNL), and 217-247 (LGYN…DADL). Over residues 247–259 (LKTPTKPKQHDQV) the composition is skewed to basic and acidic residues. The segment at 247–301 (LKTPTKPKQHDQVSKISSERSGTPKKRKAPPPPISPTQLSDVSSPRSITSTPLSG) is disordered. At T249 the chain carries Phosphothreonine. The Nuclear localization signal signature appears at 270–276 (PKKRKAP). 3 positions are modified to phosphoserine: S281, S286, and S293. A compositionally biased stretch (polar residues) spans 282-299 (PTQLSDVSSPRSITSTPL). 2 positions are modified to phosphothreonine: T295 and T297. Phosphoserine is present on residues S300, S304, S318, S327, S329, S340, S341, S350, S358, S419, S512, S515, S667, and S915. A coiled-coil region spans residues 349-374 (LSLLQAKVASLTLHNKELQDKLQAKS). Positions 387-423 (YHSTQTDLGPSLGKPGETSPPDSKSSPSVLIHSLGKS) are disordered. Positions 425 to 947 (TDNDVRIQQL…QHQEVISVYR (523 aa)) form a coiled coil.

As to quaternary structure, interacts with PALLD. Associates with actin. However, does not bind F-actin directly. Highly expressed in placenta, muscle, kidney and testis. Moderately expressed in heart, brain, lung, liver and intestine. Isoform 2 is widely expressed and expressed in fetal and adult testes, and spermatozoa.

It is found in the cytoplasm. The protein resides in the cytoskeleton. The protein localises to the stress fiber. Its subcellular location is the cell cortex. It localises to the cell junction. It is found in the nucleus. Functionally, plays a role in actin regulation at the ectoplasmic specialization, a type of cell junction specific to testis. Important for establishment of sperm polarity and normal spermatid adhesion. May also promote integrity of Sertoli cell tight junctions at the blood-testis barrier. This chain is Ankycorbin (RAI14), found in Homo sapiens (Human).